Reading from the N-terminus, the 559-residue chain is Glutamine--tRNA ligase (559 aa).

Positions 44–54 (PEPNGYLHIGH) match the 'HIGH' region motif. Residues 45–47 (EPN) and 51–57 (HIGHAKS) contribute to the ATP site. The L-glutamine site is built by Asp-77 and Tyr-222. Residues Thr-241 and 272–273 (RL) each bind ATP. The 'KMSKS' region signature appears at 279–283 (LTSKR).

This sequence belongs to the class-I aminoacyl-tRNA synthetase family. In terms of assembly, monomer.

The protein resides in the cytoplasm. It catalyses the reaction tRNA(Gln) + L-glutamine + ATP = L-glutaminyl-tRNA(Gln) + AMP + diphosphate. The chain is Glutamine--tRNA ligase from Pasteurella multocida (strain Pm70).